The following is a 649-amino-acid chain: WEB family protein At5g55860 (649 aa).

3 coiled-coil regions span residues Glu59–Gln227, Glu267–Val356, and Thr391–Lys461. The span at Glu443 to Glu453 shows a compositional bias: basic and acidic residues. The tract at residues Glu443–Glu483 is disordered. Residues Lys456–Asn467 are compositionally biased toward polar residues. Residues Ser468–Gln482 are compositionally biased toward low complexity. Residues Ala505 to Asp549 adopt a coiled-coil conformation. Residues Met583 to Lys611 form a disordered region.

This sequence belongs to the WEB family.

This is WEB family protein At5g55860 from Arabidopsis thaliana (Mouse-ear cress).